Here is a 470-residue protein sequence, read N- to C-terminus: Calmodulin-binding receptor-like cytoplasmic kinase 1 (470 aa).

2 disordered regions span residues 1–29 (MPMR…SWTD) and 65–128 (PTEC…SKSW). Basic and acidic residues predominate over residues 65–82 (PTECRSDPGESSTHDRES). Polar residues-rich tracts occupy residues 83–98 (TLSG…SFGR) and 108–121 (YRFS…PGKD). One can recognise a Protein kinase domain in the interval 147–423 (FSSVHQIGEG…MKGIAEKLWA (277 aa)). Residues 153–161 (IGEGGFGTV) and lysine 175 contribute to the ATP site. A caM-binding region spans residues 162 to 185 (FKGKLDDGTIVAIKRARKNNYGKS). Aspartate 273 (proton acceptor) is an active-site residue. A phosphoserine mark is found at serine 277 and serine 308. At threonine 309 the chain carries Phosphothreonine. The residue at position 322 (tyrosine 322) is a Phosphotyrosine.

This sequence belongs to the protein kinase superfamily. Ser/Thr protein kinase family. As to quaternary structure, interacts with calmodulin (CaM) in a Ca(2+)-dependent manner. Mg(2+) serves as cofactor. Post-translationally, autophosphorylated.

Its subcellular location is the cytoplasm. It carries out the reaction L-seryl-[protein] + ATP = O-phospho-L-seryl-[protein] + ADP + H(+). The catalysed reaction is L-threonyl-[protein] + ATP = O-phospho-L-threonyl-[protein] + ADP + H(+). With respect to regulation, up-regulated by Ca(2+)/CaM. In Arabidopsis thaliana (Mouse-ear cress), this protein is Calmodulin-binding receptor-like cytoplasmic kinase 1 (CRCK1).